Consider the following 201-residue polypeptide: Small ribosomal subunit protein uS4 (201 aa).

One can recognise an S4 RNA-binding domain in the interval 91 to 151 (SRLDNVVYRA…EKSQKMNWFE (61 aa)).

Belongs to the universal ribosomal protein uS4 family. As to quaternary structure, part of the 30S ribosomal subunit. Contacts protein S5. The interaction surface between S4 and S5 is involved in control of translational fidelity.

Functionally, one of the primary rRNA binding proteins, it binds directly to 16S rRNA where it nucleates assembly of the body of the 30S subunit. Its function is as follows. With S5 and S12 plays an important role in translational accuracy. The sequence is that of Small ribosomal subunit protein uS4 from Corynebacterium glutamicum (strain R).